We begin with the raw amino-acid sequence, 226 residues long: DELTA-thalatoxin-Avl1b (226 aa).

The signal sequence occupies residues 1 to 21 (MRHFVVFLYMFLALSIPTAFA). A propeptide spanning residues 22-45 (KKHIVTKKGNHQDITNDNEGENAE) is cleaved from the precursor. Positions 50 to 59 (AVAGAVIAGG) are plays an important role in the hemolytic activity. Positions 58 to 77 (GGELALKILTKILDEIGKID) are N-terminal region. Residues Ser101, Val134, Ser152, Pro154, Tyr180, and Tyr184 each coordinate phosphocholine. Positions 152–167 (SVPFDYNLYTNWWNVK) are trp-rich region, which is important for the binding to lipid membrane. The short motif at 191 to 193 (KPS) is the Cell attachment site, crucial for protein stability element.

It belongs to the actinoporin family. Sea anemone subfamily. As to quaternary structure, octamer or nonamer in membranes. Monomer in the soluble state.

The protein localises to the secreted. It is found in the nematocyst. Its subcellular location is the target cell membrane. Its function is as follows. Pore-forming protein that forms cations-selective hydrophilic pores of around 1 nm and causes cytolysis. Pore formation is a multi-step process that involves specific recognition of membrane sphingomyelin (but neither cholesterol nor phosphatidylcholine) using aromatic rich region and adjacent phosphocholine (POC) binding site, firm binding to the membrane (mainly driven by hydrophobic interactions) accompanied by the transfer of the N-terminal region to the lipid-water interface and finally pore formation after oligomerization of monomers. This chain is DELTA-thalatoxin-Avl1b, found in Actineria villosa (Okinawan sea anemone).